The chain runs to 179 residues: Large ribosomal subunit protein uL6c (179 aa).

This sequence belongs to the universal ribosomal protein uL6 family. Part of the 50S ribosomal subunit.

It localises to the plastid. The protein resides in the cyanelle. Its function is as follows. Binds 23S rRNA. The chain is Large ribosomal subunit protein uL6c (rpl6) from Cyanophora paradoxa.